The following is a 239-amino-acid chain: Skn-1 dependent zygotic transcript 1 protein (239 aa).

Its function is as follows. May have a role in mesendoderm development during embryogenesis. The polypeptide is Skn-1 dependent zygotic transcript 1 protein (Caenorhabditis briggsae).